A 302-amino-acid chain; its full sequence is Glutaminase (302 aa).

Substrate-binding residues include S61, N111, E155, N162, Y186, Y238, and V256.

The protein belongs to the glutaminase family. In terms of assembly, homotetramer.

The enzyme catalyses L-glutamine + H2O = L-glutamate + NH4(+). In Pseudomonas fluorescens (strain SBW25), this protein is Glutaminase.